A 67-amino-acid polypeptide reads, in one-letter code: Large ribosomal subunit protein bL35 (67 aa).

This sequence belongs to the bacterial ribosomal protein bL35 family.

This chain is Large ribosomal subunit protein bL35, found in Dehalococcoides mccartyi (strain ATCC BAA-2100 / JCM 16839 / KCTC 5957 / BAV1).